A 318-amino-acid chain; its full sequence is DNA-directed RNA polymerase subunit alpha (318 aa).

The alpha N-terminal domain (alpha-NTD) stretch occupies residues 1 to 227 (MTQFEIECLD…NLFSPLKTID (227 aa)). Residues 241–318 (HINQILIEEL…KEKTTKIYNK (78 aa)) are alpha C-terminal domain (alpha-CTD).

This sequence belongs to the RNA polymerase alpha chain family. As to quaternary structure, in plastids the minimal PEP RNA polymerase catalytic core is composed of four subunits: alpha, beta, beta', and beta''. When a (nuclear-encoded) sigma factor is associated with the core the holoenzyme is formed, which can initiate transcription.

It localises to the plastid. The protein localises to the chloroplast. It catalyses the reaction RNA(n) + a ribonucleoside 5'-triphosphate = RNA(n+1) + diphosphate. DNA-dependent RNA polymerase catalyzes the transcription of DNA into RNA using the four ribonucleoside triphosphates as substrates. In Guillardia theta (Cryptophyte), this protein is DNA-directed RNA polymerase subunit alpha.